A 91-amino-acid polypeptide reads, in one-letter code: Putative membrane protein insertion efficiency factor (91 aa).

Positions 66 to 91 (GGVDPVPSCGCHSDKETTPKEKSDNA) are disordered. The segment covering 77-91 (HSDKETTPKEKSDNA) has biased composition (basic and acidic residues).

Belongs to the UPF0161 family.

Its subcellular location is the cell inner membrane. In terms of biological role, could be involved in insertion of integral membrane proteins into the membrane. The sequence is that of Putative membrane protein insertion efficiency factor from Hydrogenovibrio crunogenus (strain DSM 25203 / XCL-2) (Thiomicrospira crunogena).